Reading from the N-terminus, the 199-residue chain is Pre T-cell antigen receptor alpha (199 aa).

Positions 1-16 are cleaved as a signal peptide; that stretch reads MARTWLLLFLGLRCQA. Residues 17 to 155 lie on the Extracellular side of the membrane; it reads LPSGIAGTPF…RQVLRLSVLR (139 aa). The cysteines at positions 47 and 107 are disulfide-linked. 2 N-linked (GlcNAc...) asparagine glycosylation sites follow: Asn-67 and Asn-117. Positions 117 to 139 are disordered; sequence NRSTHPLQLSGEEASTDRTCPQE. The helical transmembrane segment at 156-176 threads the bilayer; that stretch reads LLLFKLLLLDVFLTCSRLCVL. The Cytoplasmic portion of the chain corresponds to 177 to 199; sequence AGQHLLPPPSSKQAPASTHQSWT.

In terms of assembly, heterodimer with TCRB; disulfide linked. This heterodimer assembles with CD3 proteins into a signaling-competent pre-T-cell receptor complex. Interacts with RHBDD1. In terms of tissue distribution, found in CD45+ but not in the CD45- fetal liver cells.

The protein localises to the membrane. It localises to the cell membrane. Its function is as follows. Component of the pre-T-cell receptor complex (composed of PTCRA, TCRB and the CD3 complex) that has a crucial role in early T-cell development, particularly alpha-beta T cell differentiation. This chain is Pre T-cell antigen receptor alpha, found in Rattus norvegicus (Rat).